Reading from the N-terminus, the 108-residue chain is E3 ubiquitin-protein ligase Midline-1 (108 aa).

The region spanning 1–100 (KSAPKHEWIG…IITGLPIPDH (100 aa)) is the B30.2/SPRY domain.

Belongs to the TRIM/RBCC family. As to quaternary structure, homodimer or heterodimer with MID2. Interacts with IGBP1.

The protein localises to the cytoplasm. It is found in the cytoskeleton. It carries out the reaction S-ubiquitinyl-[E2 ubiquitin-conjugating enzyme]-L-cysteine + [acceptor protein]-L-lysine = [E2 ubiquitin-conjugating enzyme]-L-cysteine + N(6)-ubiquitinyl-[acceptor protein]-L-lysine.. Has E3 ubiquitin ligase activity towards IGBP1, promoting its monoubiquitination, which results in deprotection of the catalytic subunit of protein phosphatase PP2A, and its subsequent degradation by polyubiquitination. This Mus caroli (Ryukyu mouse) protein is E3 ubiquitin-protein ligase Midline-1 (Mid1).